Reading from the N-terminus, the 388-residue chain is Valine--pyruvate aminotransferase (388 aa).

The residue at position 234 (Lys234) is an N6-(pyridoxal phosphate)lysine.

This sequence belongs to the class-I pyridoxal-phosphate-dependent aminotransferase family. The cofactor is pyridoxal 5'-phosphate.

It catalyses the reaction L-valine + pyruvate = 3-methyl-2-oxobutanoate + L-alanine. The polypeptide is Valine--pyruvate aminotransferase (Mycobacterium tuberculosis (strain ATCC 25618 / H37Rv)).